Reading from the N-terminus, the 340-residue chain is Glyceraldehyde-3-phosphate dehydrogenase (340 aa).

NAD(+)-binding positions include 11–12 (SI) and Gly-111. 140-142 (SCN) serves as a coordination point for D-glyceraldehyde 3-phosphate. Cys-141 serves as the catalytic Nucleophile. Arg-169 lines the NAD(+) pocket. 195 to 196 (HG) lines the D-glyceraldehyde 3-phosphate pocket. Gln-303 contacts NAD(+).

The protein belongs to the glyceraldehyde-3-phosphate dehydrogenase family. Homotetramer.

The protein resides in the cytoplasm. The catalysed reaction is D-glyceraldehyde 3-phosphate + phosphate + NADP(+) = (2R)-3-phospho-glyceroyl phosphate + NADPH + H(+). The enzyme catalyses D-glyceraldehyde 3-phosphate + phosphate + NAD(+) = (2R)-3-phospho-glyceroyl phosphate + NADH + H(+). It participates in carbohydrate degradation; glycolysis; pyruvate from D-glyceraldehyde 3-phosphate: step 1/5. This is Glyceraldehyde-3-phosphate dehydrogenase from Methanococcus maripaludis (strain DSM 14266 / JCM 13030 / NBRC 101832 / S2 / LL).